Here is a 368-residue protein sequence, read N- to C-terminus: Aminomethyltransferase (368 aa).

Belongs to the GcvT family. As to quaternary structure, the glycine cleavage system is composed of four proteins: P, T, L and H.

The catalysed reaction is N(6)-[(R)-S(8)-aminomethyldihydrolipoyl]-L-lysyl-[protein] + (6S)-5,6,7,8-tetrahydrofolate = N(6)-[(R)-dihydrolipoyl]-L-lysyl-[protein] + (6R)-5,10-methylene-5,6,7,8-tetrahydrofolate + NH4(+). In terms of biological role, the glycine cleavage system catalyzes the degradation of glycine. The sequence is that of Aminomethyltransferase from Alkaliphilus oremlandii (strain OhILAs) (Clostridium oremlandii (strain OhILAs)).